Consider the following 106-residue polypeptide: MSNLIPGEIIPEQGEIELNLGKEVKTVTVSNSGDRPVQVGSHYHFFEANKALIFDREITLGMRLDIPAGTAIRFEPGDTTDVKLVSYSGLKNAYGFNSLVNGSLDT.

The protein belongs to the urease beta subunit family. As to quaternary structure, heterotrimer of UreA (gamma), UreB (beta) and UreC (alpha) subunits. Three heterotrimers associate to form the active enzyme.

Its subcellular location is the cytoplasm. The catalysed reaction is urea + 2 H2O + H(+) = hydrogencarbonate + 2 NH4(+). Its pathway is nitrogen metabolism; urea degradation; CO(2) and NH(3) from urea (urease route): step 1/1. In Prochlorococcus marinus (strain MIT 9312), this protein is Urease subunit beta.